A 310-amino-acid chain; its full sequence is UDP-N-acetylenolpyruvoylglucosamine reductase (310 aa).

An FAD-binding PCMH-type domain is found at 30–200; that stretch reads RVGGPAQWLA…VAAEFQLEPG (171 aa). Residue Arg-179 is part of the active site. The active-site Proton donor is Ser-230. The active site involves Glu-300.

This sequence belongs to the MurB family. The cofactor is FAD.

The protein localises to the cytoplasm. It catalyses the reaction UDP-N-acetyl-alpha-D-muramate + NADP(+) = UDP-N-acetyl-3-O-(1-carboxyvinyl)-alpha-D-glucosamine + NADPH + H(+). It functions in the pathway cell wall biogenesis; peptidoglycan biosynthesis. Cell wall formation. The chain is UDP-N-acetylenolpyruvoylglucosamine reductase from Synechococcus sp. (strain WH7803).